A 447-amino-acid polypeptide reads, in one-letter code: MPRMFGTDGVRGVANTEDLSPELAFALGRAAATLARERSGGRVVGVIGRDTRRSGPMLAAALSAGICSAGGDVVDLGVITTPGVAYVTTHLKADFGVMISASHNPAPDNGIKFFSGDGYKLPDEVEDQLEALVKARPDTMPRPTGAELGSIRQSPEAVEAYVEHLVSTGSPLSGLRVVVDCGHGAAYRLSPEVLRRLGAEVIALNTAPDGLNINAGCGSTHPEALQEAVRAHGADAGIAHDGDADRCIAVDERGELVDGDQIMAICALDLKARGQLPNDTLVTTVMSNMGLEMLMRRHGIRLVRTKVGDRYVLEEMLKGGHGLGGEQSGHVIFGALSTTGDGILTAVQLLSIVAREKQPLSTLAGRMQRLPQWLENVRVGRKEGWEQNQAIQAAIARAEAEMAGQGRVLVRASGTEPLIRVMLEGTDMAHIQRLAASIAEVIRTELQ.

The active-site Phosphoserine intermediate is the Ser102. Positions 102, 241, 243, and 245 each coordinate Mg(2+). Phosphoserine is present on Ser102.

Belongs to the phosphohexose mutase family. Requires Mg(2+) as cofactor. Activated by phosphorylation.

It carries out the reaction alpha-D-glucosamine 1-phosphate = D-glucosamine 6-phosphate. In terms of biological role, catalyzes the conversion of glucosamine-6-phosphate to glucosamine-1-phosphate. The polypeptide is Phosphoglucosamine mutase (Symbiobacterium thermophilum (strain DSM 24528 / JCM 14929 / IAM 14863 / T)).